Reading from the N-terminus, the 124-residue chain is Alpha-endosulfine (124 aa).

Phosphoserine; by GWL is present on serine 74. The disordered stretch occupies residues 99 to 124 (VTGDHIPTPQDLPQRKNTILTSKLAG). Over residues 113–124 (RKNTILTSKLAG) the composition is skewed to polar residues.

It belongs to the endosulfine family. In terms of processing, phosphorylation at Ser-74 by gwl during mitosis is essential for interaction with ppp2r2d (PR55-delta) and subsequent inactivation of PP2A.

The protein resides in the cytoplasm. Its function is as follows. Protein phosphatase inhibitor that specifically inhibits protein phosphatase 2A (PP2A) during mitosis. When phosphorylated at Ser-67 during mitosis, specifically interacts with ppp2r2d (PR55-delta) and inhibits its activity, leading to inactivation of PP2A, an essential condition to keep cyclin-B1-CDK1 activity high during M phase. In Danio rerio (Zebrafish), this protein is Alpha-endosulfine (ensa).